A 278-amino-acid polypeptide reads, in one-letter code: uncharacterized protein (278 aa).

Over residues 127–151 (PPTPSPPPPPAPTQPTRPTPGPAFF) the composition is skewed to pro residues. A disordered region spans residues 127–174 (PPTPSPPPPPAPTQPTRPTPGPAFFPQPFKVELHHPTPKTSSLPAPSL). The segment covering 164 to 174 (PKTSSLPAPSL) has biased composition (low complexity).

This is an uncharacterized protein from Botryotinia fuckeliana (Noble rot fungus).